The primary structure comprises 137 residues: Acidic phospholipase A2 PL-II (137 aa).

The signal sequence occupies residues 1–17 (AVCVSLLGASSIRPLPL). 7 disulfide bridges follow: Cys28-Cys89, Cys44-Cys136, Cys46-Cys62, Cys61-Cys117, Cys68-Cys110, Cys78-Cys103, and Cys96-Cys108. Tyr45, Gly47, and Gly49 together coordinate Ca(2+). His65 is a catalytic residue. Position 66 (Asp66) interacts with Ca(2+). Asp111 is an active-site residue.

The cofactor is Ca(2+). As to expression, expressed by the venom gland.

The protein localises to the secreted. The enzyme catalyses a 1,2-diacyl-sn-glycero-3-phosphocholine + H2O = a 1-acyl-sn-glycero-3-phosphocholine + a fatty acid + H(+). Its function is as follows. Snake venom phospholipase A2 (PLA2) that may act in the hemostasis system of the prey. Exhibits hydrolytic activities, and prefers the anionic micelles (dPPC with deoxycholate) (54 umol/mg/min) to the zwitterionic micelles (dPPC with Triton X-100) (15 umol/mg/min). PLA2 catalyzes the calcium-dependent hydrolysis of the 2-acyl groups in 3-sn-phosphoglycerides. The polypeptide is Acidic phospholipase A2 PL-II (Walterinnesia aegyptia (Desert black snake)).